The primary structure comprises 330 residues: uncharacterized protein (330 aa).

The region spanning 4 to 242 is the ABC transporter domain; sequence LTISDLVVEY…AGEVLFEQST (239 aa). Residue 40–47 coordinates ATP; it reads GPSGCGKT. Residue 210–330 coordinates a nucleoside 3',5'-cyclic phosphate; sequence DRVLELMPAQ…LIEHRELASE (121 aa).

Belongs to the ABC transporter superfamily.

This is an uncharacterized protein from Mycobacterium bovis (strain ATCC BAA-935 / AF2122/97).